The chain runs to 216 residues: DNA replication complex GINS protein PSF3 (216 aa).

Positions 1–16 (MSEAYFRVESGALGPE) are not essential for folding and stability of GINS complex, but may regulate accessibility to the central complex pore.

Belongs to the GINS3/PSF3 family. In terms of assembly, component of the GINS complex which is a heterotetramer of GINS1, GINS2, GINS3 and GINS4. Forms a stable subcomplex with GINS2. GINS complex interacts with DNA primase in vitro. Component of the CMG helicase complex, a hexameric ring of related MCM2-7 subunits stabilized by CDC45 and the tetrameric GINS complex.

Its subcellular location is the nucleus. The protein resides in the chromosome. In terms of biological role, required for correct functioning of the GINS complex, a complex that plays an essential role in the initiation of DNA replication, and progression of DNA replication forks. GINS complex is a core component of CDC45-MCM-GINS (CMG) helicase, the molecular machine that unwinds template DNA during replication, and around which the replisome is built. The polypeptide is DNA replication complex GINS protein PSF3 (GINS3) (Pongo abelii (Sumatran orangutan)).